The chain runs to 296 residues: MNHVGRKCSMSAIVGTTNAGKSTLVNVLVGQKVAAVTPKVQTTRVRMHAVSNHENVQLIFIDTPGIFSPKTKLEKFLVKHAWMSLKGIENVIVLVDVKNYLNQHLKKIIDRIKHSNLNAILVLNKIDIVHQSIVSEVIEYMYSLYKFSKAFTISALYGIGIDKLVDYLCETSPYGPWLYNDDQISDAPLKFFMAEITREKLFITLRHELPYSLSVVTELVEEKEDNSLIIKQVIYVTKDSHKTIILGKKGEMVKKISMESKSDLENILQVKVHLFLFVKVREFWQNHLNECVGYAE.

One can recognise an Era-type G domain in the interval Lys7 to Tyr174. The tract at residues Gly15–Ser22 is G1. Residue Gly15–Ser22 coordinates GTP. The segment at Gln41–Val45 is G2. A G3 region spans residues Asp62–Gly65. Residues Asp62–Ile66 and Asn124–Asp127 each bind GTP. Residues Asn124–Asp127 form a G4 region. Residues Ile153–Ala155 are G5. The KH type-2 domain maps to Leu205 to Glu282.

This sequence belongs to the TRAFAC class TrmE-Era-EngA-EngB-Septin-like GTPase superfamily. Era GTPase family. As to quaternary structure, monomer.

It localises to the cytoplasm. The protein localises to the cell inner membrane. An essential GTPase that binds both GDP and GTP, with rapid nucleotide exchange. Plays a role in 16S rRNA processing and 30S ribosomal subunit biogenesis and possibly also in cell cycle regulation and energy metabolism. The polypeptide is GTPase Era (Ehrlichia ruminantium (strain Gardel)).